The sequence spans 828 residues: Phenylalanine--tRNA ligase beta subunit (828 aa).

Residues 43-161 form the tRNA-binding domain; sequence LSKNTNLVVG…DQIALGSNAL (119 aa). A disordered region spans residues 203–230; that stretch reads KKKEKKTINYKTKNSKDQTNRKTTPKLN. The 84-residue stretch at 436–519 folds into the B5 domain; that stretch reads RTNPTISLDL…RFYGCHKLPP (84 aa). Asp497, Asp503, and Asp507 together coordinate Mg(2+). Positions 736–828 constitute an FDX-ACB domain; the sequence is PKFPTVIRDL…LIKHFRIEIR (93 aa).

Belongs to the phenylalanyl-tRNA synthetase beta subunit family. Type 1 subfamily. As to quaternary structure, tetramer of two alpha and two beta subunits. Requires Mg(2+) as cofactor.

It is found in the cytoplasm. It catalyses the reaction tRNA(Phe) + L-phenylalanine + ATP = L-phenylalanyl-tRNA(Phe) + AMP + diphosphate + H(+). The chain is Phenylalanine--tRNA ligase beta subunit from Aster yellows witches'-broom phytoplasma (strain AYWB).